Consider the following 3131-residue polypeptide: Enniatin synthase (3131 aa).

The tract at residues 53 to 466 (ADDKQRAVGH…VEKVDMMTQE (414 aa)) is condensation 1. The segment at 186 to 212 (NDEHPRQFETPDSSQATPEEDLQPNPS) is disordered. The segment at 495–887 (SQSPNKAAVA…GRMDSQVKIR (393 aa)) is adenylation 1. In terms of domain architecture, Carrier 1 spans 1010 to 1086 (SSGTDTYTKL…GLKAIVIGTS (77 aa)). O-(pantetheine 4'-phosphoryl)serine is present on S1047. Positions 1105-1534 (SYAQNRMWFL…ETCISVLPLT (430 aa)) are condensation 2. The interval 1563 to 1960 (FREQAAANPE…GRMDNQFKIR (398 aa)) is adenylation 2. Residues 2021–2177 (EGWQDHFESG…YLAEVIDGLI (157 aa)) are S-adenosyl-L-methionine-dependent N-methyltransferase. 2 consecutive Carrier domains span residues 2504 to 2578 (FPIS…RQGL) and 2598 to 2671 (APRT…ESSH). O-(pantetheine 4'-phosphoryl)serine is present on residues S2538 and S2632. Residues 2718 to 3123 (QDVYPSTQMQ…RHVLEEVCKT (406 aa)) form a condensation 3 region.

Belongs to the ATP-dependent AMP-binding enzyme family. Pantetheine 4'-phosphate serves as cofactor. Post-translationally, the N-terminus is blocked.

It functions in the pathway antibiotic biosynthesis; enniatin biosynthesis. The N-methylation activity is inhibited by S-adenosyl-L-homocysteine and sinefugin. In terms of biological role, nonribosomal peptide synthetase that synthesizes enniatin by coupling three D-hydroxycarboxylic acids and three L-amino acids via amide and ester bonds in an alternating fashion. Whereas ESYN1 can accept different amino acids as precursors (L -valine, L-isoleucine or L-leucine), only one species of D-hydroxycarboxylic acid can be found in natural enniatin isolates (D-hydroxyisovaleric acid, D-Hiv). D-Hiv stems from L-valine deanimation by a valine aminotransferase to 2-keto-isovaleric acid (2-Kiv), which becomes subsequently reduced by a keto-isovaleric acid reductase (KivR) to D-Hiv. Peptide bond formation and N-methylation of the amino acid occur before three enzyme-bound dipeptidols are condensed to a hexapeptidol. The protein is Enniatin synthase of Fusarium equiseti (Fusarium scirpi).